A 123-amino-acid chain; its full sequence is MKITSLPRLMRVFLPVAVLALPLAWQTAALAQSATCTQGSTCVSVGGNNDPMSKEQARQSQQQWDDTHRLRNKVNNRAEKNFDKYDRAEDAKDNCDRSANFNAYWEPNTERCLDRLSGRQINP.

A signal peptide spans 1 to 31 (MKITSLPRLMRVFLPVAVLALPLAWQTAALA). Residues 47–66 (GNNDPMSKEQARQSQQQWDD) are disordered.

This sequence belongs to the UPF0482 family.

The chain is UPF0482 protein YE2026 from Yersinia enterocolitica serotype O:8 / biotype 1B (strain NCTC 13174 / 8081).